Here is an 87-residue protein sequence, read N- to C-terminus: MAADDHIEMEGVVEEALPGTLFRVVLENGHEVLAHLCGKMRKFRIRVLPGDKVTVHISPYDLTKGRIARRTTTPSGGPRPARSGNRR.

The S1-like domain maps to 1–72; the sequence is MAADDHIEME…TKGRIARRTT (72 aa). The disordered stretch occupies residues 65–87; sequence GRIARRTTTPSGGPRPARSGNRR.

Belongs to the IF-1 family. In terms of assembly, component of the 30S ribosomal translation pre-initiation complex which assembles on the 30S ribosome in the order IF-2 and IF-3, IF-1 and N-formylmethionyl-tRNA(fMet); mRNA recruitment can occur at any time during PIC assembly.

The protein localises to the cytoplasm. Its function is as follows. One of the essential components for the initiation of protein synthesis. Stabilizes the binding of IF-2 and IF-3 on the 30S subunit to which N-formylmethionyl-tRNA(fMet) subsequently binds. Helps modulate mRNA selection, yielding the 30S pre-initiation complex (PIC). Upon addition of the 50S ribosomal subunit IF-1, IF-2 and IF-3 are released leaving the mature 70S translation initiation complex. The chain is Translation initiation factor IF-1 2 from Nitratidesulfovibrio vulgaris (strain ATCC 29579 / DSM 644 / CCUG 34227 / NCIMB 8303 / VKM B-1760 / Hildenborough) (Desulfovibrio vulgaris).